The sequence spans 146 residues: Coactosin (146 aa).

The 132-residue stretch at 1–132 folds into the ADF-H domain; the sequence is MADVSSTELK…NEEELMTKVR (132 aa).

The protein belongs to the actin-binding proteins ADF family. Coactosin subfamily. In terms of processing, the N-terminus is blocked.

The protein localises to the cytoplasm. It is found in the cytoskeleton. In terms of biological role, binds to F-actin in a calcium independent manner. Binds to the filaments along their length. This chain is Coactosin (coaA), found in Dictyostelium discoideum (Social amoeba).